We begin with the raw amino-acid sequence, 779 residues long: Acyl-homoserine lactone acylase PvdQ (779 aa).

Residues 1 to 25 form the signal peptide; it reads MIISRPLCGFVFAGLSFAVILPAQA. Positions 202-223 are cleaved as a propeptide — spacer peptide; the sequence is SQQVQALQLAAVRNQRFALERG. Serine 224 serves as the catalytic Nucleophile. A compositionally biased stretch (polar residues) spans 731-746; the sequence is ESSNPQSAHSSDQTEA. A disordered region spans residues 731–752; it reads ESSNPQSAHSSDQTEAFSKKQW.

This sequence belongs to the peptidase S45 family. In terms of assembly, heterodimer of an alpha subunit and a beta subunit processed from the same precursor.

It is found in the periplasm. It carries out the reaction an N-acyl-L-homoserine lactone + H2O = L-homoserine lactone + a carboxylate. Catalyzes the deacylation of acyl-homoserine lactone (AHL or acyl-HSL), releasing homoserine lactone (HSL) and the corresponding fatty acid. Possesses a specificity for the degradation of long-chain acyl-HSLs (side chains of 11 to 14 carbons in length). The protein is Acyl-homoserine lactone acylase PvdQ (pvdQ) of Pseudomonas savastanoi pv. phaseolicola (strain 1448A / Race 6) (Pseudomonas syringae pv. phaseolicola (strain 1448A / Race 6)).